The primary structure comprises 501 residues: Type II methyltransferase M.BsuBI (501 aa).

This sequence belongs to the N(4)/N(6)-methyltransferase family.

The catalysed reaction is a 2'-deoxyadenosine in DNA + S-adenosyl-L-methionine = an N(6)-methyl-2'-deoxyadenosine in DNA + S-adenosyl-L-homocysteine + H(+). In terms of biological role, a beta subtype methylase that recognizes the double-stranded sequence 5'-CTGCAG-3', methylates A-5 on both strands, and protects the DNA from cleavage by the BsuBI endonuclease. In Bacillus subtilis, this protein is Type II methyltransferase M.BsuBI (hsdBM).